The primary structure comprises 337 residues: Quinolinate synthase (337 aa).

2 residues coordinate iminosuccinate: H38 and S59. C104 contacts [4Fe-4S] cluster. Residues 130 to 132 (YAN) and S147 each bind iminosuccinate. [4Fe-4S] cluster is bound at residue C191. Iminosuccinate is bound by residues 217–219 (HPE) and T234. Position 288 (C288) interacts with [4Fe-4S] cluster.

This sequence belongs to the quinolinate synthase family. Type 1 subfamily. Requires [4Fe-4S] cluster as cofactor.

The protein resides in the cytoplasm. The enzyme catalyses iminosuccinate + dihydroxyacetone phosphate = quinolinate + phosphate + 2 H2O + H(+). It participates in cofactor biosynthesis; NAD(+) biosynthesis; quinolinate from iminoaspartate: step 1/1. Functionally, catalyzes the condensation of iminoaspartate with dihydroxyacetone phosphate to form quinolinate. This Wigglesworthia glossinidia brevipalpis protein is Quinolinate synthase.